The sequence spans 222 residues: U-scoloptoxin(11)-Sm5a (222 aa).

It belongs to the scoloptoxin-11 family. In terms of processing, contains 8 disulfide bonds. As to expression, expressed by the venom gland.

It is found in the secreted. This is U-scoloptoxin(11)-Sm5a from Scolopendra morsitans (Tanzanian blue ringleg centipede).